Here is a 1507-residue protein sequence, read N- to C-terminus: Paired amphipathic helix protein sin-3 (1507 aa).

Disordered regions lie at residues 1–26 (MYNPPPGGGGGNNGGDQSQQQPTNNA), 228–286 (PLAL…PPRV), 397–450 (ELGS…MMEE), 543–569 (VDDVPGPSNAPQEIKKPDDIEKKDSSK), and 1349–1434 (IPRE…MDHL). A compositionally biased stretch (polar residues) spans 16 to 26 (DQSQQQPTNNA). Basic residues predominate over residues 270–279 (RQNRPGRRKK). The PAH domain occupies 282 to 352 (GPPRVDEALA…LGFNTFLPTG (71 aa)). Acidic residues predominate over residues 427 to 438 (DGIDDEDDEESG). 2 stretches are compositionally biased toward basic and acidic residues: residues 439–450 (IEDKNNEEMMEE) and 555–568 (EIKKPDDIEKKDSS). Composition is skewed to acidic residues over residues 1354–1365 (KDDDDDDDEEGN), 1373–1382 (NVKDEDDGGD), and 1389–1421 (PDDDQPPPSNDDGDDEEDEDDEEDGPSGADEPE).

In terms of assembly, component of the SIN3S complex, which contains at least sin-3, hda-1, athp-1 and mrg-1. Interacts with ztf-11; the interaction is weak. Interacts with cfp-1. Expressed in all ray structural cells including ray 6, 7, 8 and 9 of the male tail. Also expressed in the inner labial neurons, socket cells, the cephalic neurons in the head and the ventral nerve cord.

It is found in the nucleus. Probable transcriptional repressor required for the deposition of dimethylated 'Lys-9' of histone H3 (H3K9me2) on asynapsed chromosome pairs (both autosomes and sex chromosomes) during meiosis, but this does not seem to solely affect the transcriptional status. Plays a role in ray fusion and patterning in the male tail, and this may be through activity of the histone deacetylase complex (HDAC). The chain is Paired amphipathic helix protein sin-3 from Caenorhabditis elegans.